Here is a 201-residue protein sequence, read N- to C-terminus: Potassium-transporting ATPase KdpC subunit (201 aa).

Residues 13–33 traverse the membrane as a helical segment; it reads IIFMIFTILCGGIYTIFITGI.

This sequence belongs to the KdpC family. In terms of assembly, the system is composed of three essential subunits: KdpA, KdpB and KdpC.

The protein resides in the cell membrane. Part of the high-affinity ATP-driven potassium transport (or Kdp) system, which catalyzes the hydrolysis of ATP coupled with the electrogenic transport of potassium into the cytoplasm. This subunit acts as a catalytic chaperone that increases the ATP-binding affinity of the ATP-hydrolyzing subunit KdpB by the formation of a transient KdpB/KdpC/ATP ternary complex. The polypeptide is Potassium-transporting ATPase KdpC subunit (Clostridium botulinum (strain Eklund 17B / Type B)).